The following is a 333-amino-acid chain: Adenosine deaminase (333 aa).

The Zn(2+) site is built by H12 and H14. 3 residues coordinate substrate: H14, D16, and G170. H197 is a Zn(2+) binding site. E200 (proton donor) is an active-site residue. D278 contacts Zn(2+). D279 provides a ligand contact to substrate.

It belongs to the metallo-dependent hydrolases superfamily. Adenosine and AMP deaminases family. Adenosine deaminase subfamily. Zn(2+) is required as a cofactor.

It catalyses the reaction adenosine + H2O + H(+) = inosine + NH4(+). It carries out the reaction 2'-deoxyadenosine + H2O + H(+) = 2'-deoxyinosine + NH4(+). Functionally, catalyzes the hydrolytic deamination of adenosine and 2-deoxyadenosine. In Salmonella enteritidis PT4 (strain P125109), this protein is Adenosine deaminase.